The following is a 53-amino-acid chain: Small polypeptide DEVIL 16 (53 aa).

A glycan (N-linked (GlcNAc...) asparagine) is linked at N6. Residues 14-45 are required for DVL/RTFL small polypeptide activity; that stretch reads TFGQKCSHVVKKQRAKFYILRRCIAMLVCWHD. Residues 30 to 46 traverse the membrane as a helical segment; it reads FYILRRCIAMLVCWHDQ.

This sequence belongs to the DVL/RTFL small polypeptides family. Mostly expressed in stems, flower buds, flowers and seedling shoots, to a lesser extent, in roots and young cauline leaves, but not in mature rosette leaves. Barely observed in cotyledons and leaf primordia.

It localises to the cell membrane. In terms of biological role, small polypeptide acting as a regulatory molecule which coordinates cellular responses required for differentiation, growth and development, probably by restricting polar cell proliferation in lateral organs (e.g. leaves) and coordinating socket cell recruitment and differentiation at trichome sites. Regulates the positional cue and cell proliferation along the body axis. The sequence is that of Small polypeptide DEVIL 16 from Arabidopsis thaliana (Mouse-ear cress).